The primary structure comprises 306 residues: Heme A synthase (306 aa).

Residues 1–5 are Cytoplasmic-facing; it reads MKALR. The chain crosses the membrane as a helical span at residues 6 to 26; that stretch reads AVSLANTAVMLLAVLWGAWVT. Residues 27 to 56 lie on the Extracellular side of the membrane; it reads SSDSGDGCGASWPLCKGTFMPDWDYAAIVE. A disulfide bridge connects residues C34 and C41. Residue E56 is part of the active site. A helical transmembrane segment spans residues 57-77; it reads FGHRVVSALAGLLSVAVLVWV. Position 59 (H59) interacts with heme o. The Cytoplasmic segment spans residues 78–89; that stretch reads ARVRPSETRLKR. The chain crosses the membrane as a helical span at residues 90–110; sequence LAFGTFFFVVLQGGLGAAAVL. The Extracellular portion of the chain corresponds to 111–116; that stretch reads RPQPDL. Residues 117 to 137 form a helical membrane-spanning segment; sequence VMALHFGFSLLCFTFALLVTV. Heme o is bound at residue H121. The Cytoplasmic portion of the chain corresponds to 138–164; that stretch reads ALGQGERAAFQRPDVSAQPVAPGLRTQ. A helical membrane pass occupies residues 165–185; that stretch reads IWGLAVYTYLVVYLGAYVRHL. Topologically, residues 186 to 206 are extracellular; the sequence is GASMACTGWPLCNGELIPPLY. C191 and C197 are oxidised to a cystine. A helical membrane pass occupies residues 207 to 227; that stretch reads GPVGANFAHRLGAALAVVLVL. Residue H215 participates in heme b binding. The Cytoplasmic segment spans residues 228–247; it reads RLWWTARRLTERDDLRRGAA. Residues 248 to 268 form a helical membrane-spanning segment; it reads WALALMAAQVASGALFPLGYL. At 269–277 the chain is on the extracellular side; sequence NLLTQLLHT. Residue H276 participates in heme b binding. The helical transmembrane segment at 278 to 298 threads the bilayer; it reads GLITGFWGVLSYLCYLTLPVG. Residues 299-306 lie on the Cytoplasmic side of the membrane; it reads RETVAVSA.

The protein belongs to the COX15/CtaA family. Type 1 subfamily. In terms of assembly, interacts with CtaB. It depends on heme b as a cofactor.

The protein localises to the cell membrane. The enzyme catalyses Fe(II)-heme o + 2 A + H2O = Fe(II)-heme a + 2 AH2. It participates in porphyrin-containing compound metabolism; heme A biosynthesis; heme A from heme O: step 1/1. Functionally, catalyzes the conversion of heme O to heme A by two successive hydroxylations of the methyl group at C8. The first hydroxylation forms heme I, the second hydroxylation results in an unstable dihydroxymethyl group, which spontaneously dehydrates, resulting in the formyl group of heme A. This chain is Heme A synthase, found in Symbiobacterium thermophilum (strain DSM 24528 / JCM 14929 / IAM 14863 / T).